Reading from the N-terminus, the 598-residue chain is Pentatricopeptide repeat-containing protein At5g14820, mitochondrial (598 aa).

Residues 1–98 (MAAAPWLYLS…RGFSSGSSNV (98 aa)) constitute a mitochondrion transit peptide. 10 PPR repeats span residues 193–227 (DSRTYNSMMSILAKTRQFETMVSVLEEMGTKGLLT), 229–261 (ETFTIAMKAFAAAKERKKAVGIFELMKKYKFKI), 262–292 (GVETINCLLDSLGRAKLGKEAQVLFDKLKER), 296–330 (NMMTYTVLLNGWCRVRNLIEAARIWNDMIDHGLKP), 331–365 (DIVAHNVMLEGLLRSMKKSDAIKLFHVMKSKGPCP), 366–400 (NVRSYTIMIRDFCKQSSMETAIEYFDDMVDSGLQP), 401–435 (DAAVYTCLITGFGTQKKLDTVYELLKEMQEKGHPP), 436–470 (DGKTYNALIKLMANQKMPEHGTRIYNKMIQNEIEP), 471–505 (SIHTFNMIMKSYFVARNYEMGRAVWDEMIKKGICP), and 506–540 (DDNSYTVLIRGLISEGKSREACRYLEEMLDKGMKT).

This sequence belongs to the PPR family. P subfamily.

It is found in the mitochondrion. The chain is Pentatricopeptide repeat-containing protein At5g14820, mitochondrial from Arabidopsis thaliana (Mouse-ear cress).